The chain runs to 313 residues: Porphobilinogen deaminase (313 aa).

The residue at position 242 (Cys242) is an S-(dipyrrolylmethanemethyl)cysteine.

This sequence belongs to the HMBS family. As to quaternary structure, monomer. Dipyrromethane serves as cofactor.

The enzyme catalyses 4 porphobilinogen + H2O = hydroxymethylbilane + 4 NH4(+). The protein operates within porphyrin-containing compound metabolism; protoporphyrin-IX biosynthesis; coproporphyrinogen-III from 5-aminolevulinate: step 2/4. In terms of biological role, tetrapolymerization of the monopyrrole PBG into the hydroxymethylbilane pre-uroporphyrinogen in several discrete steps. This is Porphobilinogen deaminase from Salmonella dublin (strain CT_02021853).